The chain runs to 149 residues: Arginine repressor (149 aa).

The protein belongs to the ArgR family.

The protein resides in the cytoplasm. It participates in amino-acid biosynthesis; L-arginine biosynthesis [regulation]. Regulates arginine biosynthesis genes. This chain is Arginine repressor, found in Alkaliphilus oremlandii (strain OhILAs) (Clostridium oremlandii (strain OhILAs)).